Here is a 294-residue protein sequence, read N- to C-terminus: Cyclin-dependent kinase A-1 (294 aa).

In terms of domain architecture, Protein kinase spans 4–287; sequence YEKVEKIGEG…ARAALEHEYF (284 aa). ATP contacts are provided by residues 10 to 18 and lysine 33; that span reads IGEGTYGVV. The residue at position 15 (tyrosine 15) is a Phosphotyrosine. The active-site Proton acceptor is the aspartate 127. Phosphothreonine is present on threonine 161.

The protein belongs to the protein kinase superfamily. CMGC Ser/Thr protein kinase family. CDC2/CDKX subfamily. Interacts with CDT1A, CYCA2-3, CYCD2-1, CYCD3-1, CYCD4-1, CYCD4-2, CYCH1-1, CYCU1-1, CYCU2-1, CYCU2-2, CYCU3-1, CYCU4-1, CYCU4-2, CYCU4-3, CKS1, KRP2/ICK2, KRP3/ICK6, KRP4/ICK7, KRP6/ICK4, KRP7/ICK5, and C-terminal domain of KRP1/ICK1. Interacts with WEE1 and TIF4A-1/EIF4A-1. Interacts with PAS2; when phosphorylated at Tyr-15. Interacts with SMR3, SMR4, SMR5, SMR6, SMR8 and At4g14310. Binds to CYCD3-2. Component of a DREAM-like complex which modulates a variety of developmentally regulated genes and of the mitotic genes in proliferating and differentiated cells. Interacts with MYB3R3 at later and with MYB3R4 at earlier stages of leaf development. May interact with SPCH. In terms of processing, phosphorylated at Tyr-15 by WEE1. Phosphorylation at Thr-161 is important for the kinase activity and substrate binding. Binding to the anti-phosphatase PAS2 prevents dephosphorylation. Expressed in roots, stems, flowers and siliques.

The protein localises to the cytoplasm. It is found in the nucleus. The enzyme catalyses L-seryl-[protein] + ATP = O-phospho-L-seryl-[protein] + ADP + H(+). It catalyses the reaction L-threonyl-[protein] + ATP = O-phospho-L-threonyl-[protein] + ADP + H(+). It carries out the reaction [DNA-directed RNA polymerase] + ATP = phospho-[DNA-directed RNA polymerase] + ADP + H(+). CDK kinase activated by CDKF-1. CDK kinase activity inhibited by KRP1/ICK1, KRP2/ICK2, KRP3/ICK6, KRP4/ICK7, KRP5/ICK3, KRP6/ICK4 and KRP7/ICK5. Down-regulated by phosphorylation by WEE1. Its function is as follows. Involved in the control of the cell cycle. Essential for both G1/S and G2/M (mitosis) phase transitions. Functions in cell morphogenesis as well as cell proliferation. Required for cell division (entry into mitosis) of the generative cell in male gametogenesis. Required to trigger guard mother cells (GMC) symmetric divisions at the late stage of stomatal development, probably via the regulation of G1 to S transition in the cell cycle. Required for the function of SPCH in entering the stomatal lineage. Promotes divisions in the guard cells (GCs) after the guard mother cells (GMC) symmetric division when in the presence of CYCD3-2 via the phosphorylation of SPCH. The protein is Cyclin-dependent kinase A-1 of Arabidopsis thaliana (Mouse-ear cress).